The following is a 297-amino-acid chain: Ribonuclease HIII (297 aa).

Positions 81 to 297 constitute an RNase H type-2 domain; it reads IPIIGTDEVG…NTKKAQALLK (217 aa). Asp-87, Glu-88, and Asp-192 together coordinate a divalent metal cation.

Belongs to the RNase HII family. RnhC subfamily. Mn(2+) is required as a cofactor. Requires Mg(2+) as cofactor.

Its subcellular location is the cytoplasm. It carries out the reaction Endonucleolytic cleavage to 5'-phosphomonoester.. In terms of biological role, endonuclease that specifically degrades the RNA of RNA-DNA hybrids. In Streptococcus agalactiae serotype III (strain NEM316), this protein is Ribonuclease HIII.